We begin with the raw amino-acid sequence, 264 residues long: MNKVKVGIVGCLGRQGRHLVSEISASDIAEVSAGLVRIGSEYVGKVLGVVIGCNCDAKITDSLEHLFDVSDVVIEFTNPNTMIECMKMAELKKKPMVSGTTGISEDMVFQDYIKSVPFLWSANLSFSMNILLKLVEDATRMLSGYDVEIWEIHHRYKKDSPSGTSLMLGKAAARGMNVQFRMNQYIKGGQESRQDNKSIGYAVSRGGVGLSDHKIIFAGDEDVIEFSHRATNKNVYAKGALKAALWLIGQPCGIYTMSDMMVTQ.

An NAD(+)-binding site is contributed by 10 to 15; that stretch reads GCLGRQ. Arg37 is an NADP(+) binding site. Residues 99–101 and 121–124 contribute to the NAD(+) site; these read GTT and SANL. His153 acts as the Proton donor/acceptor in catalysis. Position 154 (His154) interacts with (S)-2,3,4,5-tetrahydrodipicolinate. Lys157 serves as the catalytic Proton donor. Residue 163–164 participates in (S)-2,3,4,5-tetrahydrodipicolinate binding; sequence GT.

This sequence belongs to the DapB family.

It localises to the cytoplasm. The catalysed reaction is (S)-2,3,4,5-tetrahydrodipicolinate + NAD(+) + H2O = (2S,4S)-4-hydroxy-2,3,4,5-tetrahydrodipicolinate + NADH + H(+). It catalyses the reaction (S)-2,3,4,5-tetrahydrodipicolinate + NADP(+) + H2O = (2S,4S)-4-hydroxy-2,3,4,5-tetrahydrodipicolinate + NADPH + H(+). Its pathway is amino-acid biosynthesis; L-lysine biosynthesis via DAP pathway; (S)-tetrahydrodipicolinate from L-aspartate: step 4/4. Its function is as follows. Catalyzes the conversion of 4-hydroxy-tetrahydrodipicolinate (HTPA) to tetrahydrodipicolinate. The chain is 4-hydroxy-tetrahydrodipicolinate reductase from Ehrlichia ruminantium (strain Gardel).